Consider the following 1171-residue polypeptide: Protein WWC2 (1171 aa).

2 consecutive WW domains span residues 9-42 (LPLPDGWEEARDYDGKVFYIDHNSRQTSWIDPRD) and 56-89 (NELPWGWESSYDPQIGVYFINHINQTTQIEDPRK). Coiled-coil stretches lie at residues 120-193 (KEQR…YKEQ), 223-257 (ELKSIRKAISTGEKEKQDLMQSLVKLKERFHLEEA), and 301-420 (LAEK…KSAT). Disordered stretches follow at residues 521–552 (SPTAQQDTQDAKPPKSVTSLSSLSSLSSLSPP) and 603–637 (QALAERKSTGEGLRHQSSASQEGRTDIEFPRKNPD). Over residues 534-551 (PKSVTSLSSLSSLSSLSP) the composition is skewed to low complexity. 2 stretches are compositionally biased toward basic and acidic residues: residues 606–616 (AERKSTGEGLR) and 625–637 (GRTDIEFPRKNPD). Positions 684 to 806 (GAAQAQLILR…FSNDVHTQWY (123 aa)) constitute a C2 domain. Coiled-coil stretches lie at residues 836 to 870 (LDLDAVSALLERTSAELEAVEQELAQEDDDQEQLC) and 1047 to 1123 (DLEL…NAEK).

It belongs to the WWC family.

The protein resides in the cytoplasm. It is found in the cytosol. Its function is as follows. Negative regulator of the Hippo signaling pathway, also known as the Salvador-Warts-Hippo (SWH) pathway. This Xenopus tropicalis (Western clawed frog) protein is Protein WWC2 (wwc2).